A 424-amino-acid polypeptide reads, in one-letter code: D-inositol 3-phosphate glycosyltransferase (424 aa).

Residue His-20 participates in 1D-myo-inositol 3-phosphate binding. Residues 26 to 27 (QP) and Gly-34 each bind UDP-N-acetyl-alpha-D-glucosamine. Residues 31 to 36 (DAGGMN), Lys-89, Tyr-122, Thr-146, and Arg-166 each bind 1D-myo-inositol 3-phosphate. The UDP-N-acetyl-alpha-D-glucosamine site is built by Arg-240, Lys-245, and Met-306. Tyr-315, Arg-316, and Ala-318 together coordinate Mg(2+). Glu-328 and Glu-336 together coordinate UDP-N-acetyl-alpha-D-glucosamine. Residue Thr-342 coordinates Mg(2+).

It belongs to the glycosyltransferase group 1 family. MshA subfamily. In terms of assembly, homodimer.

It catalyses the reaction 1D-myo-inositol 3-phosphate + UDP-N-acetyl-alpha-D-glucosamine = 1D-myo-inositol 2-acetamido-2-deoxy-alpha-D-glucopyranoside 3-phosphate + UDP + H(+). Catalyzes the transfer of a N-acetyl-glucosamine moiety to 1D-myo-inositol 3-phosphate to produce 1D-myo-inositol 2-acetamido-2-deoxy-glucopyranoside 3-phosphate in the mycothiol biosynthesis pathway. The chain is D-inositol 3-phosphate glycosyltransferase from Kribbella flavida (strain DSM 17836 / JCM 10339 / NBRC 14399).